A 113-amino-acid chain; its full sequence is Hydrogenase maturation factor HypA (113 aa).

A Ni(2+)-binding site is contributed by histidine 2. The Zn(2+) site is built by cysteine 73, cysteine 76, cysteine 89, and cysteine 92.

The protein belongs to the HypA/HybF family.

Involved in the maturation of [NiFe] hydrogenases. Required for nickel insertion into the metal center of the hydrogenase. The chain is Hydrogenase maturation factor HypA from Acidithiobacillus ferrooxidans (strain ATCC 23270 / DSM 14882 / CIP 104768 / NCIMB 8455) (Ferrobacillus ferrooxidans (strain ATCC 23270)).